A 320-amino-acid polypeptide reads, in one-letter code: Cytochrome f (320 aa).

A signal peptide spans 1–35 (MQTRNTFSWIREEITRSISVSLIIYIITWASISSA). Heme contacts are provided by Tyr36, Cys56, Cys59, and His60. Residues 286–305 (VQGLLFFLGSVVLAQIFLVL) form a helical membrane-spanning segment.

Belongs to the cytochrome f family. In terms of assembly, the 4 large subunits of the cytochrome b6-f complex are cytochrome b6, subunit IV (17 kDa polypeptide, petD), cytochrome f and the Rieske protein, while the 4 small subunits are PetG, PetL, PetM and PetN. The complex functions as a dimer. It depends on heme as a cofactor.

Its subcellular location is the plastid. The protein resides in the chloroplast thylakoid membrane. Functionally, component of the cytochrome b6-f complex, which mediates electron transfer between photosystem II (PSII) and photosystem I (PSI), cyclic electron flow around PSI, and state transitions. The chain is Cytochrome f (petA) from Arabidopsis thaliana (Mouse-ear cress).